The sequence spans 274 residues: Large ribosomal subunit protein uL2 (274 aa).

Disordered stretches follow at residues 36 to 61 (QKSK…HKQR) and 223 to 274 (VAMN…RRKR). Positions 37 to 46 (KSKTGGRNSN) are enriched in polar residues. 2 stretches are compositionally biased toward basic residues: residues 50–61 (TTRHRGGGHKQR) and 254–274 (KGHK…RRKR).

It belongs to the universal ribosomal protein uL2 family. As to quaternary structure, part of the 50S ribosomal subunit. Forms a bridge to the 30S subunit in the 70S ribosome.

Its function is as follows. One of the primary rRNA binding proteins. Required for association of the 30S and 50S subunits to form the 70S ribosome, for tRNA binding and peptide bond formation. It has been suggested to have peptidyltransferase activity; this is somewhat controversial. Makes several contacts with the 16S rRNA in the 70S ribosome. In Halorhodospira halophila (strain DSM 244 / SL1) (Ectothiorhodospira halophila (strain DSM 244 / SL1)), this protein is Large ribosomal subunit protein uL2.